A 62-amino-acid chain; its full sequence is Large ribosomal subunit protein bL28 (62 aa).

It belongs to the bacterial ribosomal protein bL28 family.

In Helicobacter pylori (strain HPAG1), this protein is Large ribosomal subunit protein bL28.